Consider the following 552-residue polypeptide: Metal transporter Nramp6.1 (552 aa).

N-linked (GlcNAc...) asparagine glycosylation occurs at asparagine 11. Helical transmembrane passes span 55–75, 88–108, 133–155, 159–181, 189–209, 238–258, and 275–295; these read FLSY…PGNL, ELLW…SLAA, CLWL…GTAF, ILFN…LLLG, KLEL…FGEM, IALL…ALVL, and YFLI…LAVI. Asparagine 306 is a glycosylation site (N-linked (GlcNAc...) asparagine). Transmembrane regions (helical) follow at residues 338–358, 377–397, 402–422, 438–458, and 478–498; these read IYAI…TYAG, LVTR…GGSS, LIII…IPLL, IYII…NIYY, and VFIG…VIYL. A disordered region spans residues 511–552; that stretch reads PNKNDPQQQTNMENGLAKSTEGPEMVDRAPYREDLADIPLPE. Residues 514–523 show a composition bias toward polar residues; the sequence is NDPQQQTNME. A compositionally biased stretch (basic and acidic residues) spans 535 to 545; that stretch reads MVDRAPYREDL.

Belongs to the NRAMP (TC 2.A.55) family.

The protein localises to the membrane. Probable divalent metal transporter. The polypeptide is Metal transporter Nramp6.1 (Populus trichocarpa (Western balsam poplar)).